Consider the following 420-residue polypeptide: MIKATDRKLVVGLEIGTAKVAALVGEVLPDGMVNIIGVGSCPSRGMDKGGVNDLESVVKCVQRAIDQAELMADCQISSVYLALSGKHISCQNEIGMVPISEEEVTQEDVENVVHTAKSVRVRDEHRVLHVIPQEYAIDYQEGIKNPVGLSGVRMQAKVHLITCHNDMAKNIVKAVERCGLKVDQLIFAGLASSYSVLTEDERELGVCVVDIGGGTMDIAVYTGGALRHTKVIPYAGNVVTSDIAYAFGTPPSDAEAIKVRHGCALGSIVGKDESVEVPSVGGRPPRSLQRQTLAEVIEPRYTELLNLVNEEILQLQEKLRQQGVKHHLAAGIVLTGGAAQIEGLAACAQRVFHTQVRIGAPLNITGLTDYAQEPYYSTAVGLLHYGKESHLNGEAEVEKRVTASVGSWIKRLNSWLRKEF.

Belongs to the FtsA/MreB family. Self-interacts. Interacts with FtsZ.

The protein resides in the cell inner membrane. Functionally, cell division protein that is involved in the assembly of the Z ring. May serve as a membrane anchor for the Z ring. This is Cell division protein FtsA from Escherichia coli O157:H7.